The following is a 297-amino-acid chain: MISPAKINLGLEIPFKRLDGFHEIRSVFLKISWGDDIEIEPASNGVFELFSNNEIILEKRKLYDQVSERGDIKNNILYKTFIKARSLFPELPGVKIHLTKRISPAGGLGGGSTNAASLLNFLFSWCPFFTSDEMFVLAAEIGSDVPFFLGEGHAFVTGKGEILEEIEVHHGQGILALTPQVMNTSEMYSLLKKPLQESASQKNGNTLSKNLISILKNGDWSSLQGRLWNDFEPVAFQLHPELGVLKDKFLEFGSSYCSLTGSGSSMYGLVQGLEIQEELLQRLRQEFSNLTFVRFNF.

Catalysis depends on residues K6 and D144.

The protein belongs to the GHMP kinase family. IspE subfamily.

It carries out the reaction 4-CDP-2-C-methyl-D-erythritol + ATP = 4-CDP-2-C-methyl-D-erythritol 2-phosphate + ADP + H(+). It functions in the pathway isoprenoid biosynthesis; isopentenyl diphosphate biosynthesis via DXP pathway; isopentenyl diphosphate from 1-deoxy-D-xylulose 5-phosphate: step 3/6. Catalyzes the phosphorylation of the position 2 hydroxy group of 4-diphosphocytidyl-2C-methyl-D-erythritol. This Leptospira interrogans serogroup Icterohaemorrhagiae serovar copenhageni (strain Fiocruz L1-130) protein is 4-diphosphocytidyl-2-C-methyl-D-erythritol kinase.